The following is a 176-amino-acid chain: Xanthine-guanine phosphoribosyltransferase (176 aa).

Residues 51-52 (RG) and 110-118 (DDLVDTGKT) each bind 5-phospho-alpha-D-ribose 1-diphosphate. Aspartate 111 contacts Mg(2+). 2 residues coordinate guanine: aspartate 114 and isoleucine 157. Aspartate 114 and isoleucine 157 together coordinate xanthine. Residues 114–118 (DTGKT) and 156–157 (WI) each bind GMP.

The protein belongs to the purine/pyrimidine phosphoribosyltransferase family. XGPT subfamily. As to quaternary structure, homotetramer. The cofactor is Mg(2+).

It is found in the cell inner membrane. The catalysed reaction is GMP + diphosphate = guanine + 5-phospho-alpha-D-ribose 1-diphosphate. It carries out the reaction XMP + diphosphate = xanthine + 5-phospho-alpha-D-ribose 1-diphosphate. The enzyme catalyses IMP + diphosphate = hypoxanthine + 5-phospho-alpha-D-ribose 1-diphosphate. The protein operates within purine metabolism; GMP biosynthesis via salvage pathway; GMP from guanine: step 1/1. It participates in purine metabolism; XMP biosynthesis via salvage pathway; XMP from xanthine: step 1/1. Its function is as follows. Purine salvage pathway enzyme that catalyzes the transfer of the ribosyl-5-phosphate group from 5-phospho-alpha-D-ribose 1-diphosphate (PRPP) to the N9 position of the 6-oxopurines guanine and xanthine to form the corresponding ribonucleotides GMP (guanosine 5'-monophosphate) and XMP (xanthosine 5'-monophosphate), with the release of PPi. To a lesser extent, also acts on hypoxanthine. This chain is Xanthine-guanine phosphoribosyltransferase, found in Bradyrhizobium diazoefficiens (strain JCM 10833 / BCRC 13528 / IAM 13628 / NBRC 14792 / USDA 110).